A 222-amino-acid chain; its full sequence is Thiol:disulfide interchange protein DsbL (222 aa).

The first 27 residues, 1-27 (MSKLGISSLFKTILLTAALAVSFTASA), serve as a signal peptide directing secretion. Positions 28–221 (FTEGTDYMVL…MADLIRELAS (194 aa)) constitute a Thioredoxin domain. A disulfide bond links Cys-56 and Cys-59.

The protein belongs to the thioredoxin family. DsbL subfamily. As to quaternary structure, interacts with DsbI.

The protein localises to the periplasm. In terms of biological role, involved in disulfide-bond formation. Acts by transferring its disulfide bond to other proteins. Part of a redox system composed of DsbI and DsbL that mediates formation of an essential disulfide bond in AssT. This is Thiol:disulfide interchange protein DsbL from Escherichia coli O6:H1 (strain CFT073 / ATCC 700928 / UPEC).